Consider the following 245-residue polypeptide: 14-3-3 protein zeta (245 aa).

Belongs to the 14-3-3 family. As to quaternary structure, homodimer. Present in all adult tissues examined with the highest levels in the brain.

The protein localises to the cytoplasm. Its function is as follows. Adapter protein implicated in the regulation of a large spectrum of both general and specialized signaling pathways. Binds to a large number of partners, usually by recognition of a phosphoserine or phosphothreonine motif. Binding generally results in the modulation of the activity of the binding partner. The protein is 14-3-3 protein zeta (ywhaz) of Xenopus laevis (African clawed frog).